Consider the following 561-residue polypeptide: MKKVWLNRYPADVPAEINPDRYQSLVELFEHAATRYADQPAFVNMGEVMTFRKLEERSRAFAAYLQQGLGLKKGDRVALMMPNLLQYPVALFGILRAGMIVVNVNPLYTPRELEHQLNDSGAAAIIIVSNFAHTLEKVVEKTSVQHVILTRMGDQLSTAKGTVVNFVVKYIKRLVPKYHLPDAISFRSALQHGYRMQYVKPEVVAEDLAFLQYTGGTTGVAKGAMLTHRNMLANLEQVKATYGPLLHPGKELVVTALPLYHIFALTMNCLLFIELGGQNLLITNPRDIPGLVKELAKYPFTAMTGVNTLFNALLNNKEFQQLDFSSLHLSAGGGMPVQNVVAERWVKLTGQYLLEGYGLTECAPLVSVNPHDIDYHSGSIGLPVPSTEAKLVDDDDNEVAPGEAGELCVKGPQVMLGYWQRPDATDEIIKDGWLHTGDIAVMDEDGFLRIVDRKKDMILVSGFNVYPNEIEDVVMQHSGVQEVAAVGVPSGSSGEAVKLFVVKKDPALTDDALITFCRRHLTGYKVPKQVEFREELPKSNVGKILRRELRDEARGKVDNKA.

213-224 (YTGGTTGVAKGA) contacts ATP.

This sequence belongs to the ATP-dependent AMP-binding enzyme family. Mg(2+) is required as a cofactor.

Its subcellular location is the membrane. It catalyses the reaction a long-chain fatty acid + ATP + CoA = a long-chain fatty acyl-CoA + AMP + diphosphate. The protein operates within lipid metabolism; fatty acid beta-oxidation. Catalyzes the esterification, concomitant with transport, of exogenous long-chain fatty acids into metabolically active CoA thioesters for subsequent degradation or incorporation into phospholipids. In Salmonella typhi, this protein is Long-chain-fatty-acid--CoA ligase (fadD).